A 93-amino-acid polypeptide reads, in one-letter code: Protein BOLA2 (93 aa).

Cys29 is modified (S-glutathionyl cysteine; transient; alternate). The disordered stretch occupies residues 72–93 (KAQTPQQWKPPSQDSATLTKDA).

The protein belongs to the bolA/yrbA family. Homodimer. Interacts in vitro with GRXS14, GRXS15, GRXS16 and GRXS17, but not with GRXC5. Interacts in vivo only with GRXS17. In terms of processing, can be either glutathionylated or forming covalent homodimers, depending on the oxidation state.

It is found in the cytoplasm. The protein resides in the nucleus. May act either alone or in interaction with glutaredoxin as a redox-regulated transcriptional regulator, or as a factor regulating Fe-S cluster biogenesis. The GRXS17-BOLA2 heterodimer binds a labile, oxygen sensitive iron-sulfur cluster. This is Protein BOLA2 from Arabidopsis thaliana (Mouse-ear cress).